Consider the following 314-residue polypeptide: Homoserine O-succinyltransferase (314 aa).

The active-site Acyl-thioester intermediate is C142. 2 residues coordinate substrate: K163 and S192. Catalysis depends on H235, which acts as the Proton acceptor. E237 is a catalytic residue. R249 lines the substrate pocket.

This sequence belongs to the MetA family.

It localises to the cytoplasm. The enzyme catalyses L-homoserine + succinyl-CoA = O-succinyl-L-homoserine + CoA. It participates in amino-acid biosynthesis; L-methionine biosynthesis via de novo pathway; O-succinyl-L-homoserine from L-homoserine: step 1/1. Its function is as follows. Transfers a succinyl group from succinyl-CoA to L-homoserine, forming succinyl-L-homoserine. The protein is Homoserine O-succinyltransferase of Photobacterium profundum (strain SS9).